The chain runs to 304 residues: Ribosomal RNA small subunit methyltransferase H (304 aa).

Residues 37–39 (GGH), aspartate 57, phenylalanine 79, aspartate 100, and histidine 107 contribute to the S-adenosyl-L-methionine site.

It belongs to the methyltransferase superfamily. RsmH family.

It is found in the cytoplasm. The enzyme catalyses cytidine(1402) in 16S rRNA + S-adenosyl-L-methionine = N(4)-methylcytidine(1402) in 16S rRNA + S-adenosyl-L-homocysteine + H(+). Specifically methylates the N4 position of cytidine in position 1402 (C1402) of 16S rRNA. The polypeptide is Ribosomal RNA small subunit methyltransferase H (Phocaeicola vulgatus (strain ATCC 8482 / DSM 1447 / JCM 5826 / CCUG 4940 / NBRC 14291 / NCTC 11154) (Bacteroides vulgatus)).